We begin with the raw amino-acid sequence, 1025 residues long: AP-2 complex subunit alpha (1025 aa).

The interval 713-737 (RSIMVPMPPPSRRNTIDDVNSKISS) is disordered. Threonine 727 bears the Phosphothreonine mark. Phosphoserine is present on serine 733.

Belongs to the adaptor complexes large subunit family. As to quaternary structure, adaptor protein complex 2 (AP-2) is a heterotetramer composed of two large adaptins (alpha-type subunit APL3 and beta-type subunit APL1), a medium chain (mu-type subunit APM4) and a small adaptin (sigma-type subunit APS2).

The protein resides in the cell membrane. The protein localises to the membrane. It is found in the coated pit. Adaptins are components of the adaptor complexes which link clathrin to receptors in coated vesicles. Clathrin-associated protein complexes are believed to interact with the cytoplasmic tails of membrane proteins, leading to their selection and concentration. Alpha adaptin is a subunit of the plasma membrane adaptor. Facilitates interaction between APL1 and APS2. This Saccharomyces cerevisiae (strain ATCC 204508 / S288c) (Baker's yeast) protein is AP-2 complex subunit alpha (APL3).